Consider the following 184-residue polypeptide: Shikimate kinase (184 aa).

20-25 (GVGKSR) contributes to the ATP binding site. Ser24 contacts Mg(2+). Substrate is bound by residues Asp42, Arg66, and Gly88. Arg127 serves as a coordination point for ATP. Arg146 lines the substrate pocket. An ATP-binding site is contributed by Arg162.

Belongs to the shikimate kinase family. Monomer. It depends on Mg(2+) as a cofactor.

It localises to the cytoplasm. The enzyme catalyses shikimate + ATP = 3-phosphoshikimate + ADP + H(+). The protein operates within metabolic intermediate biosynthesis; chorismate biosynthesis; chorismate from D-erythrose 4-phosphate and phosphoenolpyruvate: step 5/7. Functionally, catalyzes the specific phosphorylation of the 3-hydroxyl group of shikimic acid using ATP as a cosubstrate. The sequence is that of Shikimate kinase from Thermus thermophilus (strain ATCC BAA-163 / DSM 7039 / HB27).